The sequence spans 389 residues: Chitin-binding protein CbpD (389 aa).

The first 25 residues, 1–25, serve as a signal peptide directing secretion; sequence MKHYSATLALLPLTLALFLPQAAHA. One can recognise a Chitin-binding type-4 domain in the interval 26-208; sequence HGSMETPPSR…EAFYACIDVS (183 aa).

Post-translationally, can be detected in the extracellular supernatant as a 43 kDa protein and a 23 kDa protein, both proteins have the same N-terminus. Only the larger protein binds chitin, which may protect it from further processing and/or degradation by elastase (lasB). It is not clear whether the short form is functional or a degradation product.

It localises to the secreted. Functionally, binds chitin but does not hydrolyze it, has no detectable protease or staphylolytic activity. The chain is Chitin-binding protein CbpD from Pseudomonas aeruginosa (strain ATCC 15692 / DSM 22644 / CIP 104116 / JCM 14847 / LMG 12228 / 1C / PRS 101 / PAO1).